Reading from the N-terminus, the 461-residue chain is Cysteine--tRNA ligase (461 aa).

Position 28 (Cys28) interacts with Zn(2+). The 'HIGH' region motif lies at Ile30–His40. The Zn(2+) site is built by Cys209, His234, and Glu238. The 'KMSKS' region signature appears at Lys266–Ser270. Lys269 serves as a coordination point for ATP.

Belongs to the class-I aminoacyl-tRNA synthetase family. As to quaternary structure, monomer. It depends on Zn(2+) as a cofactor.

The protein localises to the cytoplasm. It catalyses the reaction tRNA(Cys) + L-cysteine + ATP = L-cysteinyl-tRNA(Cys) + AMP + diphosphate. The protein is Cysteine--tRNA ligase of Yersinia enterocolitica serotype O:8 / biotype 1B (strain NCTC 13174 / 8081).